The following is a 295-amino-acid chain: Protoheme IX farnesyltransferase 2 (295 aa).

The next 9 membrane-spanning stretches (helical) occupy residues 9–29, 36–56, 83–103, 108–128, 135–155, 163–183, 209–229, 230–250, and 264–284; these read ITKP…FFLA, FALF…GCVF, LPLA…LLYV, LSAF…SLWL, GTLV…CAVS, VTLL…IAIF, IVLY…GGYA, GLGY…MAWG, and VFGF…VDSQ.

It belongs to the UbiA prenyltransferase family. Protoheme IX farnesyltransferase subfamily.

The protein resides in the cell inner membrane. The catalysed reaction is heme b + (2E,6E)-farnesyl diphosphate + H2O = Fe(II)-heme o + diphosphate. The protein operates within porphyrin-containing compound metabolism; heme O biosynthesis; heme O from protoheme: step 1/1. Converts heme B (protoheme IX) to heme O by substitution of the vinyl group on carbon 2 of heme B porphyrin ring with a hydroxyethyl farnesyl side group. The sequence is that of Protoheme IX farnesyltransferase 2 from Pseudomonas putida (strain GB-1).